The sequence spans 241 residues: Uracil-DNA glycosylase (241 aa).

The active-site Proton acceptor is the D71.

This sequence belongs to the uracil-DNA glycosylase (UDG) superfamily. UNG family.

It localises to the cytoplasm. It carries out the reaction Hydrolyzes single-stranded DNA or mismatched double-stranded DNA and polynucleotides, releasing free uracil.. Functionally, excises uracil residues from the DNA which can arise as a result of misincorporation of dUMP residues by DNA polymerase or due to deamination of cytosine. The polypeptide is Uracil-DNA glycosylase (Xanthomonas campestris pv. campestris (strain 8004)).